Here is a 450-residue protein sequence, read N- to C-terminus: Folate synthesis bifunctional protein (450 aa).

An HPPK region spans residues 1 to 166; that stretch reads MTSWNFVCLS…TFAELAAIYP (166 aa). Positions 180-441 constitute a Pterin-binding domain; it reads TQIMGIVNIT…QVEGNRRALA (262 aa). The DHPS stretch occupies residues 182-450; it reads IMGIVNITDN…AAAAWAGMFV (269 aa). Asn-187 contacts Mg(2+). (7,8-dihydropterin-6-yl)methyl diphosphate contacts are provided by residues Thr-227, Asp-267, Asn-287, Asp-358, Lys-395, and 429-431; that span reads RVH.

It in the C-terminal section; belongs to the DHPS family. In the N-terminal section; belongs to the HPPK family. Mg(2+) serves as cofactor.

The enzyme catalyses 6-hydroxymethyl-7,8-dihydropterin + ATP = (7,8-dihydropterin-6-yl)methyl diphosphate + AMP + H(+). The catalysed reaction is (7,8-dihydropterin-6-yl)methyl diphosphate + 4-aminobenzoate = 7,8-dihydropteroate + diphosphate. It functions in the pathway cofactor biosynthesis; tetrahydrofolate biosynthesis; 2-amino-4-hydroxy-6-hydroxymethyl-7,8-dihydropteridine diphosphate from 7,8-dihydroneopterin triphosphate: step 4/4. The protein operates within cofactor biosynthesis; tetrahydrofolate biosynthesis; 7,8-dihydrofolate from 2-amino-4-hydroxy-6-hydroxymethyl-7,8-dihydropteridine diphosphate and 4-aminobenzoate: step 1/2. The polypeptide is Folate synthesis bifunctional protein (folKP) (Chlamydia trachomatis serovar D (strain ATCC VR-885 / DSM 19411 / UW-3/Cx)).